The chain runs to 366 residues: 2-oxoglutarate synthase subunit KorA (366 aa).

In terms of assembly, heterotetramer of the KorA, KorB, KorC and KorD subunits.

It catalyses the reaction 2 oxidized [2Fe-2S]-[ferredoxin] + 2-oxoglutarate + CoA = succinyl-CoA + 2 reduced [2Fe-2S]-[ferredoxin] + CO2 + H(+). In Methanocaldococcus jannaschii (strain ATCC 43067 / DSM 2661 / JAL-1 / JCM 10045 / NBRC 100440) (Methanococcus jannaschii), this protein is 2-oxoglutarate synthase subunit KorA (korA).